The chain runs to 220 residues: Peptidoglycan hydrolase gp5 (220 aa).

This sequence belongs to the peptidase U40 family. Monomer.

The protein resides in the virion. In terms of biological role, muralytic enzyme exposed to host peptidoglycan layer after membrane fusion during viral entry. Functions as an exolysin that cleaves the peptide bridge formed by meso-diaminopimelic acid and D-alanine. Also lyses the host cell late in infection to release the virions. This is Peptidoglycan hydrolase gp5 (P5) from Pseudomonas savastanoi pv. phaseolicola (Pseudomonas syringae pv. phaseolicola).